We begin with the raw amino-acid sequence, 363 residues long: Inositol-3-phosphate synthase (363 aa).

6 residues coordinate NAD(+): Asp68, Ala127, Tyr147, Ser190, Asp225, and Lys238.

The protein belongs to the myo-inositol 1-phosphate synthase family. In terms of assembly, monomer. It depends on NAD(+) as a cofactor.

The catalysed reaction is D-glucose 6-phosphate = 1D-myo-inositol 3-phosphate. Its pathway is polyol metabolism; myo-inositol biosynthesis; myo-inositol from D-glucose 6-phosphate: step 1/2. Key enzyme in myo-inositol biosynthesis pathway that catalyzes the conversion of glucose 6-phosphate to 1D-myo-inositol 3-phosphate in a NAD-dependent manner. Plays a key role in oxidative stress resistance as its product is the precursor of the protective antioxidant mycothiol (MSH or AcCys-GlcN-Ins). In Corynebacterium glutamicum (strain ATCC 13032 / DSM 20300 / JCM 1318 / BCRC 11384 / CCUG 27702 / LMG 3730 / NBRC 12168 / NCIMB 10025 / NRRL B-2784 / 534), this protein is Inositol-3-phosphate synthase.